A 131-amino-acid polypeptide reads, in one-letter code: Profilin-7 (131 aa).

Cysteines 13 and 115 form a disulfide. Positions 81–97 match the Involved in PIP2 interaction motif; that stretch reads AVIRGKKGSGGITVKKT. Thr-111 carries the phosphothreonine modification.

This sequence belongs to the profilin family. As to quaternary structure, occurs in many kinds of cells as a complex with monomeric actin in a 1:1 ratio. Phosphorylated by MAP kinases.

It localises to the cytoplasm. The protein resides in the cytoskeleton. Binds to actin and affects the structure of the cytoskeleton. At high concentrations, profilin prevents the polymerization of actin, whereas it enhances it at low concentrations. This is Profilin-7 from Zea mays (Maize).